A 511-amino-acid chain; its full sequence is Anthranilate synthase component 1 (511 aa).

The tract at residues 1–36 is disordered; the sequence is MTTHAAEAPTTDPQGAPGSQKTPDATEAEEAARATV. Polar residues predominate over residues 11–23; sequence TDPQGAPGSQKTP. L-tryptophan contacts are provided by residues Ser84 and 292 to 294; that span reads PYM. 328–329 serves as a coordination point for chorismate; that stretch reads GT. Glu355 contributes to the Mg(2+) binding site. Chorismate is bound by residues Tyr443, Arg463, 477-479, and Gly479; that span reads GAG. Residue Glu492 coordinates Mg(2+).

The protein belongs to the anthranilate synthase component I family. As to quaternary structure, heterotetramer consisting of two non-identical subunits: a beta subunit (TrpG) and a large alpha subunit (TrpE). Requires Mg(2+) as cofactor.

It carries out the reaction chorismate + L-glutamine = anthranilate + pyruvate + L-glutamate + H(+). Its pathway is amino-acid biosynthesis; L-tryptophan biosynthesis; L-tryptophan from chorismate: step 1/5. Its activity is regulated as follows. Feedback inhibited by tryptophan. Part of a heterotetrameric complex that catalyzes the two-step biosynthesis of anthranilate, an intermediate in the biosynthesis of L-tryptophan. In the first step, the glutamine-binding beta subunit (TrpG) of anthranilate synthase (AS) provides the glutamine amidotransferase activity which generates ammonia as a substrate that, along with chorismate, is used in the second step, catalyzed by the large alpha subunit of AS (TrpE) to produce anthranilate. In the absence of TrpG, TrpE can synthesize anthranilate directly from chorismate and high concentrations of ammonia. This Streptomyces coelicolor (strain ATCC BAA-471 / A3(2) / M145) protein is Anthranilate synthase component 1 (trpE).